The sequence spans 507 residues: Serine/threonine-protein kinase BSK11 (507 aa).

Glycine 2 is lipidated: N-myristoyl glycine. Positions aspartate 16 to glycine 26 are enriched in basic and acidic residues. Residues aspartate 16–asparagine 44 are disordered. The segment covering arginine 27–alanine 41 has biased composition (basic residues). In terms of domain architecture, Protein kinase spans asparagine 75 to leucine 332. Residues cysteine 81–valine 89 and lysine 106 contribute to the ATP site. The active-site Proton acceptor is aspartate 200.

It belongs to the protein kinase superfamily. Ser/Thr protein kinase family. In terms of assembly, interacts with BRI1, ASK7/BIN2, BSK1, BSK6 and BSK8. In terms of processing, phosphorylated by BRI1, ASK7/BIN2 and ASK9/BIL2.

The protein localises to the cell membrane. The enzyme catalyses L-seryl-[protein] + ATP = O-phospho-L-seryl-[protein] + ADP + H(+). It catalyses the reaction L-threonyl-[protein] + ATP = O-phospho-L-threonyl-[protein] + ADP + H(+). Probable serine/threonine kinase that acts as a positive regulator of brassinosteroid (BR) signaling downstream of the receptor kinase BRI1. This Arabidopsis thaliana (Mouse-ear cress) protein is Serine/threonine-protein kinase BSK11.